Consider the following 247-residue polypeptide: Dihydroorotate dehydrogenase B (NAD(+)), electron transfer subunit (247 aa).

The region spanning 2–96 is the FAD-binding FR-type domain; that stretch reads RWKMKARVLS…TGPHGNGFEI (95 aa). FAD contacts are provided by residues 49–52, 64–66, and 71–72; these read RPFS, LYQ, and GT. [2Fe-2S] cluster is bound by residues C210, C215, C218, and C234.

This sequence belongs to the PyrK family. As to quaternary structure, heterotetramer of 2 PyrK and 2 PyrD type B subunits. The cofactor is [2Fe-2S] cluster. FAD serves as cofactor.

It functions in the pathway pyrimidine metabolism; UMP biosynthesis via de novo pathway; orotate from (S)-dihydroorotate (NAD(+) route): step 1/1. Its function is as follows. Responsible for channeling the electrons from the oxidation of dihydroorotate from the FMN redox center in the PyrD type B subunit to the ultimate electron acceptor NAD(+). This chain is Dihydroorotate dehydrogenase B (NAD(+)), electron transfer subunit, found in Caldanaerobacter subterraneus subsp. tengcongensis (strain DSM 15242 / JCM 11007 / NBRC 100824 / MB4) (Thermoanaerobacter tengcongensis).